Reading from the N-terminus, the 216-residue chain is NKG2-D type II integral membrane protein (216 aa).

The Cytoplasmic portion of the chain corresponds to 1-51 (MGWIRGRRSRHSWEMSEFHNYNLDLKKSDFSTRWQKQRCPVVKSKCRENAS). The chain crosses the membrane as a helical; Signal-anchor for type II membrane protein span at residues 52–72 (PFFFCCFIAVAMGIRFIIMVT). The Extracellular segment spans residues 73–216 (IWSAVFLNSL…NTYICMQRTV (144 aa)). Disulfide bonds link cysteine 96–cysteine 105 and cysteine 99–cysteine 110. Residues 98–213 (PCPKNWICYK…STPNTYICMQ (116 aa)) enclose the C-type lectin domain. N-linked (GlcNAc...) asparagine glycosylation is found at asparagine 115, asparagine 131, asparagine 163, and asparagine 202. 2 disulfides stabilise this stretch: cysteine 127–cysteine 211 and cysteine 189–cysteine 203.

In terms of assembly, homodimer; disulfide-linked. Heterohexamer composed of two subunits of KLRK1 and four subunits of HCST/DAP10. Interacts (via transmembrane domain) with HCST/DAP10 (via transmembrane domain); the interaction is required for KLRK1 NK cell surface and induces NK cell-mediated cytotoxicity. Can form disulfide-bonded heterodimer with CD94. Interacts with CEACAM1; recruits PTPN6 that dephosphorylates VAV1. In terms of tissue distribution, natural killer cells.

The protein resides in the cell membrane. In terms of biological role, functions as an activating and costimulatory receptor involved in immunosurveillance upon binding to various cellular stress-inducible ligands displayed at the surface of autologous tumor cells and virus-infected cells. Provides both stimulatory and costimulatory innate immune responses on activated killer (NK) cells, leading to cytotoxic activity. Acts as a costimulatory receptor for T-cell receptor (TCR) in CD8(+) T-cell-mediated adaptive immune responses by amplifying T-cell activation. Stimulates perforin-mediated elimination of ligand-expressing tumor cells. Signaling involves calcium influx, culminating in the expression of TNF-alpha. Participates in NK cell-mediated bone marrow graft rejection. May play a regulatory role in differentiation and survival of NK cells. Binds to ligands belonging to various subfamilies of MHC class I-related glycoproteins. This chain is NKG2-D type II integral membrane protein (KLRK1), found in Pan troglodytes (Chimpanzee).